The primary structure comprises 419 residues: Gamma-glutamyl phosphate reductase (419 aa).

The protein belongs to the gamma-glutamyl phosphate reductase family.

The protein resides in the cytoplasm. The catalysed reaction is L-glutamate 5-semialdehyde + phosphate + NADP(+) = L-glutamyl 5-phosphate + NADPH + H(+). It functions in the pathway amino-acid biosynthesis; L-proline biosynthesis; L-glutamate 5-semialdehyde from L-glutamate: step 2/2. In terms of biological role, catalyzes the NADPH-dependent reduction of L-glutamate 5-phosphate into L-glutamate 5-semialdehyde and phosphate. The product spontaneously undergoes cyclization to form 1-pyrroline-5-carboxylate. This chain is Gamma-glutamyl phosphate reductase, found in Bordetella bronchiseptica (strain ATCC BAA-588 / NCTC 13252 / RB50) (Alcaligenes bronchisepticus).